Reading from the N-terminus, the 215-residue chain is Phosphatidylserine decarboxylase proenzyme (215 aa).

S184 (schiff-base intermediate with substrate; via pyruvic acid) is an active-site residue. S184 carries the post-translational modification Pyruvic acid (Ser); by autocatalysis.

The protein belongs to the phosphatidylserine decarboxylase family. PSD-A subfamily. In terms of assembly, heterodimer of a large membrane-associated beta subunit and a small pyruvoyl-containing alpha subunit. Pyruvate is required as a cofactor. Is synthesized initially as an inactive proenzyme. Formation of the active enzyme involves a self-maturation process in which the active site pyruvoyl group is generated from an internal serine residue via an autocatalytic post-translational modification. Two non-identical subunits are generated from the proenzyme in this reaction, and the pyruvate is formed at the N-terminus of the alpha chain, which is derived from the carboxyl end of the proenzyme. The post-translation cleavage follows an unusual pathway, termed non-hydrolytic serinolysis, in which the side chain hydroxyl group of the serine supplies its oxygen atom to form the C-terminus of the beta chain, while the remainder of the serine residue undergoes an oxidative deamination to produce ammonia and the pyruvoyl prosthetic group on the alpha chain.

The protein localises to the cell membrane. The enzyme catalyses a 1,2-diacyl-sn-glycero-3-phospho-L-serine + H(+) = a 1,2-diacyl-sn-glycero-3-phosphoethanolamine + CO2. Its pathway is phospholipid metabolism; phosphatidylethanolamine biosynthesis; phosphatidylethanolamine from CDP-diacylglycerol: step 2/2. In terms of biological role, catalyzes the formation of phosphatidylethanolamine (PtdEtn) from phosphatidylserine (PtdSer). This chain is Phosphatidylserine decarboxylase proenzyme, found in Ralstonia pickettii (strain 12J).